The sequence spans 887 residues: Putative RNA-binding protein 15B (887 aa).

A disordered region spans residues 1-132; sequence MKRQSERDSS…EPAGPGSTAA (132 aa). Residues 10-20 are compositionally biased toward low complexity; sequence SPSGRGSSSSA. Composition is skewed to basic and acidic residues over residues 22–34 and 65–77; these read RPRE…EAGG and GHRD…DANH. A compositionally biased stretch (gly residues) spans 83 to 94; the sequence is RSSGAPGGGGRT. The span at 95 to 110 shows a compositional bias: low complexity; the sequence is GKASGDPGAGGASPRA. A phosphoserine mark is found at serine 107 and serine 111. The span at 111-122 shows a compositional bias: pro residues; that stretch reads SPLPPPPPPPGA. Low complexity predominate over residues 123–132; the sequence is EPAGPGSTAA. Residues 136–216 enclose the RRM 1 domain; sequence KTLLISSLSP…RPLKVEPVYL (81 aa). Lysine 210 participates in a covalent cross-link: Glycyl lysine isopeptide (Lys-Gly) (interchain with G-Cter in SUMO2). Residues 215–249 are disordered; that stretch reads YLRGGGSSRRSSSSSAAASTPPPGPPAPADPLGYL. Residues 222-233 show a composition bias toward low complexity; that stretch reads SRRSSSSSAAAS. Positions 234–243 are enriched in pro residues; that stretch reads TPPPGPPAPA. A phosphoserine mark is found at serine 261 and serine 263. RRM domains are found at residues 333–410 and 414–488; these read RNLF…YGKA and TRLW…FAKA. Threonine 529 bears the Phosphothreonine mark. Phosphoserine occurs at positions 549, 553, and 559. The segment at 549–703 is disordered; the sequence is SLSKSSDRRN…TLEEPKHETK (155 aa). Composition is skewed to basic and acidic residues over residues 570-613, 623-643, and 668-700; these read RSGE…ERSR, RGSD…EGTK, and EAPD…EPKH. The Nuclear localization signal motif lies at 590–594; it reads RRKRR. Residue lysine 699 forms a Glycyl lysine isopeptide (Lys-Gly) (interchain with G-Cter in SUMO2) linkage. An SPOC domain is found at 708–886; it reads LSEYAQTLQL…HMVIVIVRDT (179 aa). Positions 719-887 are interaction with Epstein-Barr virus BMLF1; that stretch reads WNGLLVLKNS…MVIVIVRDTA (169 aa).

This sequence belongs to the RRM Spen family. In terms of assembly, component of the WMM complex, a N6-methyltransferase complex composed of a catalytic subcomplex, named MAC, and of an associated subcomplex, named MACOM. The MAC subcomplex is composed of METTL3 and METTL14. The MACOM subcomplex is composed of WTAP, ZC3H13, CBLL1/HAKAI, VIRMA, and, in some cases of RBM15 (RBM15 or RBM15B). May interact with NCOR2. Interacts with NXF1, the interaction is required to promote mRNA export.

It localises to the nucleus. Its subcellular location is the nucleoplasm. The protein resides in the nucleus speckle. It is found in the nucleus envelope. In terms of biological role, RNA-binding protein that acts as a key regulator of N6-methyladenosine (m6A) methylation of RNAs, thereby regulating different processes, such as alternative splicing of mRNAs and X chromosome inactivation mediated by Xist RNA. Associated component of the WMM complex, a complex that mediates N6-methyladenosine (m6A) methylation of RNAs, a modification that plays a role in the efficiency of mRNA splicing and RNA processing. Plays a key role in m6A methylation, possibly by binding target RNAs and recruiting the WMM complex. Involved in random X inactivation mediated by Xist RNA: acts by binding Xist RNA and recruiting the WMM complex, which mediates m6A methylation, leading to target YTHDC1 reader on Xist RNA and promoting transcription repression activity of Xist. Functions in the regulation of alternative or illicit splicing, possibly by regulating m6A methylation. Inhibits pre-mRNA splicing. Also functions as a mRNA export factor by acting as a cofactor for the nuclear export receptor NXF1. This Mus musculus (Mouse) protein is Putative RNA-binding protein 15B (Rbm15b).